Consider the following 201-residue polypeptide: LexA repressor (201 aa).

A DNA-binding region (H-T-H motif) is located at residues 29–49; it reads VREICKAVGLSSTSSVHFHLK. Residues serine 125 and lysine 162 each act as for autocatalytic cleavage activity in the active site.

This sequence belongs to the peptidase S24 family. In terms of assembly, homodimer.

It carries out the reaction Hydrolysis of Ala-|-Gly bond in repressor LexA.. In terms of biological role, represses a number of genes involved in the response to DNA damage (SOS response), including recA and lexA. In the presence of single-stranded DNA, RecA interacts with LexA causing an autocatalytic cleavage which disrupts the DNA-binding part of LexA, leading to derepression of the SOS regulon and eventually DNA repair. The protein is LexA repressor of Clostridium botulinum (strain ATCC 19397 / Type A).